Consider the following 178-residue polypeptide: uncharacterized protein (178 aa).

The segment covering 1–13 (MEVASSSSACQFD) has biased composition (polar residues). Disordered stretches follow at residues 1-24 (MEVA…ELKP) and 47-114 (WPSR…KKEK).

This is an uncharacterized protein from Caenorhabditis elegans.